The chain runs to 128 residues: NADH dehydrogenase [ubiquinone] 1 beta subcomplex subunit 6 (128 aa).

N-acetylthreonine is present on Thr-2. Lys-24 is subject to N6-acetyllysine. Residues 68–86 (SIFVFTHVLVPVWIIHYYM) form a helical membrane-spanning segment.

This sequence belongs to the complex I NDUFB6 subunit family. As to quaternary structure, complex I is composed of 45 different subunits.

It localises to the mitochondrion inner membrane. Functionally, accessory subunit of the mitochondrial membrane respiratory chain NADH dehydrogenase (Complex I), that is believed not to be involved in catalysis. Complex I functions in the transfer of electrons from NADH to the respiratory chain. The immediate electron acceptor for the enzyme is believed to be ubiquinone. This chain is NADH dehydrogenase [ubiquinone] 1 beta subcomplex subunit 6 (NDUFB6), found in Pan troglodytes (Chimpanzee).